The primary structure comprises 266 residues: 3-methyl-2-oxobutanoate hydroxymethyltransferase (266 aa).

Residues Asp45 and Asp84 each contribute to the Mg(2+) site. 3-methyl-2-oxobutanoate is bound by residues 45–46 (DS), Asp84, and Lys113. Glu115 contributes to the Mg(2+) binding site. Catalysis depends on Glu183, which acts as the Proton acceptor.

It belongs to the PanB family. As to quaternary structure, homodecamer; pentamer of dimers. It depends on Mg(2+) as a cofactor.

The protein localises to the cytoplasm. The enzyme catalyses 3-methyl-2-oxobutanoate + (6R)-5,10-methylene-5,6,7,8-tetrahydrofolate + H2O = 2-dehydropantoate + (6S)-5,6,7,8-tetrahydrofolate. The protein operates within cofactor biosynthesis; (R)-pantothenate biosynthesis; (R)-pantoate from 3-methyl-2-oxobutanoate: step 1/2. Catalyzes the reversible reaction in which hydroxymethyl group from 5,10-methylenetetrahydrofolate is transferred onto alpha-ketoisovalerate to form ketopantoate. The polypeptide is 3-methyl-2-oxobutanoate hydroxymethyltransferase (Coxiella burnetii (strain Dugway 5J108-111)).